A 326-amino-acid polypeptide reads, in one-letter code: tRNA-modifying protein YgfZ (326 aa).

Folate is bound by residues tryptophan 27 and tryptophan 189.

It belongs to the tRNA-modifying YgfZ family.

Its subcellular location is the cytoplasm. Its function is as follows. Folate-binding protein involved in regulating the level of ATP-DnaA and in the modification of some tRNAs. It is probably a key factor in regulatory networks that act via tRNA modification, such as initiation of chromosomal replication. In Salmonella schwarzengrund (strain CVM19633), this protein is tRNA-modifying protein YgfZ.